We begin with the raw amino-acid sequence, 202 residues long: Ribosome biogenesis regulatory protein homolog (202 aa).

The interval 82–103 (TLPPPTTPLPREKPVPQPKPET) is disordered.

This sequence belongs to the RRS1 family. As to quaternary structure, component of a hexameric 5S RNP precursor complex, composed of 5S RNA, RRS1, RPF2, RPL5, RPL11 and SYO1; this complex acts as a precursor for ribosome assembly.

The protein localises to the nucleus. Its function is as follows. Involved in ribosomal large subunit assembly. The polypeptide is Ribosome biogenesis regulatory protein homolog (Chaetomium thermophilum (strain DSM 1495 / CBS 144.50 / IMI 039719) (Thermochaetoides thermophila)).